The primary structure comprises 321 residues: Lipoyl synthase (321 aa).

Positions 68, 73, 79, 94, 98, 101, and 308 each coordinate [4Fe-4S] cluster. Residues 80–297 enclose the Radical SAM core domain; that stretch reads FNHGTATFMI…KAEALAMGFT (218 aa).

It belongs to the radical SAM superfamily. Lipoyl synthase family. [4Fe-4S] cluster serves as cofactor.

The protein resides in the cytoplasm. It carries out the reaction [[Fe-S] cluster scaffold protein carrying a second [4Fe-4S](2+) cluster] + N(6)-octanoyl-L-lysyl-[protein] + 2 oxidized [2Fe-2S]-[ferredoxin] + 2 S-adenosyl-L-methionine + 4 H(+) = [[Fe-S] cluster scaffold protein] + N(6)-[(R)-dihydrolipoyl]-L-lysyl-[protein] + 4 Fe(3+) + 2 hydrogen sulfide + 2 5'-deoxyadenosine + 2 L-methionine + 2 reduced [2Fe-2S]-[ferredoxin]. The protein operates within protein modification; protein lipoylation via endogenous pathway; protein N(6)-(lipoyl)lysine from octanoyl-[acyl-carrier-protein]: step 2/2. Catalyzes the radical-mediated insertion of two sulfur atoms into the C-6 and C-8 positions of the octanoyl moiety bound to the lipoyl domains of lipoate-dependent enzymes, thereby converting the octanoylated domains into lipoylated derivatives. The protein is Lipoyl synthase of Escherichia fergusonii (strain ATCC 35469 / DSM 13698 / CCUG 18766 / IAM 14443 / JCM 21226 / LMG 7866 / NBRC 102419 / NCTC 12128 / CDC 0568-73).